Reading from the N-terminus, the 523-residue chain is MHYSQMRWMFFCLTALLHGSFIVNAAKILVYCPSISKSHVLLCSKYADLLHNAGHDTVLFIPSYSKLLDNYDGAKHAKVWRLHNVTEAYDTKLGTLANVMENSHIGFIDRLTFDADFWIDMCADLLGKLPEMQHIIDYKFDLVIYNEIDPCTPAIVRLFNIPKTVLLSSEAIMDKVAWNLGLPTLPSYVPSVEENPNHDRMSFFERMSNVYKFFQSIVVHYLQDIHVLNLFRKEVSSDFPSIAEIIRNVSLVLVNTDEIFDLPRSYSSKFVYVGMLEAGKDENVTLPKKQDDYFKKGKSGSVFVSFGTVTPFRSLPERIQLSILNAIQKLPDYHFVVKTTADDESSAQFFSTVQNVDLVDWVPQKAVLRHANLKLFVSHGGMNSVLETMYYGVPMVIMPVFTDQFRNGRNVERRGAGKMVLRETVVKETFFDAIHSVLEEKSYSSSVKRISHLMKNKPFTSEERVTKWIDFVLKYETSEHFDLESNNLSIIEHNHLDLFFYLCIISLLNFVVYRKIFKRKSQS.

Residues Met-1 to Ala-25 form the signal peptide. N-linked (GlcNAc...) asparagine glycosylation is found at Asn-84, Asn-248, Asn-283, and Asn-487. Residues Ile-490–Leu-508 traverse the membrane as a helical segment.

It belongs to the UDP-glycosyltransferase family.

The protein localises to the membrane. It carries out the reaction glucuronate acceptor + UDP-alpha-D-glucuronate = acceptor beta-D-glucuronoside + UDP + H(+). This chain is Putative UDP-glucuronosyltransferase ugt-50 (ugt-50), found in Caenorhabditis elegans.